We begin with the raw amino-acid sequence, 96 residues long: UPF0235 protein VC_0458 (96 aa).

Belongs to the UPF0235 family.

The sequence is that of UPF0235 protein VC_0458 from Vibrio cholerae serotype O1 (strain ATCC 39315 / El Tor Inaba N16961).